The sequence spans 734 residues: 1,4-alpha-glucan branching enzyme GlgB (734 aa).

The active-site Nucleophile is aspartate 417. Catalysis depends on glutamate 470, which acts as the Proton donor.

The protein belongs to the glycosyl hydrolase 13 family. GlgB subfamily. In terms of assembly, monomer.

The enzyme catalyses Transfers a segment of a (1-&gt;4)-alpha-D-glucan chain to a primary hydroxy group in a similar glucan chain.. The protein operates within glycan biosynthesis; glycogen biosynthesis. Catalyzes the formation of the alpha-1,6-glucosidic linkages in glycogen by scission of a 1,4-alpha-linked oligosaccharide from growing alpha-1,4-glucan chains and the subsequent attachment of the oligosaccharide to the alpha-1,6 position. This chain is 1,4-alpha-glucan branching enzyme GlgB (glgB), found in Rhizobium radiobacter (Agrobacterium tumefaciens).